The chain runs to 287 residues: Syntaxin-11 (287 aa).

Residues 41–71 (LESLYRDIRDIQDENQLLVADVKRLGKQNAR) are a coiled coil. Residues 204 to 266 (LNEIESRHRE…GQAKAQVRKA (63 aa)) enclose the t-SNARE coiled-coil homology domain.

This sequence belongs to the syntaxin family. Interacts with the SNARE proteins SNAP-23 and VAMP.

It is found in the membrane. The protein localises to the golgi apparatus. Its subcellular location is the trans-Golgi network membrane. Its function is as follows. SNARE that acts to regulate protein transport between late endosomes and the trans-Golgi network. The protein is Syntaxin-11 (STX11) of Homo sapiens (Human).